We begin with the raw amino-acid sequence, 209 residues long: Ribonuclease HII (209 aa).

In terms of domain architecture, RNase H type-2 spans 18–209 (SLVAGVDEVG…FKPVKALLER (192 aa)). 3 residues coordinate a divalent metal cation: aspartate 24, glutamate 25, and aspartate 116.

This sequence belongs to the RNase HII family. Requires Mn(2+) as cofactor. It depends on Mg(2+) as a cofactor.

The protein resides in the cytoplasm. The catalysed reaction is Endonucleolytic cleavage to 5'-phosphomonoester.. Endonuclease that specifically degrades the RNA of RNA-DNA hybrids. The polypeptide is Ribonuclease HII (Shewanella oneidensis (strain ATCC 700550 / JCM 31522 / CIP 106686 / LMG 19005 / NCIMB 14063 / MR-1)).